The primary structure comprises 307 residues: Porphobilinogen deaminase (307 aa).

Cys239 carries the S-(dipyrrolylmethanemethyl)cysteine modification.

Belongs to the HMBS family. As to quaternary structure, monomer. Dipyrromethane serves as cofactor.

The enzyme catalyses 4 porphobilinogen + H2O = hydroxymethylbilane + 4 NH4(+). It participates in porphyrin-containing compound metabolism; protoporphyrin-IX biosynthesis; coproporphyrinogen-III from 5-aminolevulinate: step 2/4. Functionally, tetrapolymerization of the monopyrrole PBG into the hydroxymethylbilane pre-uroporphyrinogen in several discrete steps. The sequence is that of Porphobilinogen deaminase from Campylobacter jejuni subsp. jejuni serotype O:6 (strain 81116 / NCTC 11828).